The following is a 771-amino-acid chain: MELKRLSISWQFLIVLVLILQSLSALDFDPYRVLGVSRTASQADIKKAYKKLAREWHPDKNKDPGAEDKFIQISKAYEILSNEEKRTNYDHYGDAGENQGYQQQREYRFRHFHENFYFDESFFHFPFNSERRDSIDEKYLLHFSHYVNEVVPDSFKKPYLIKITSDWCFSCIHIEPIWKEVVQELEGLGVGIGVVHAGYERRLAHHLGAHSTPSILGIINGKISFFHNAVVHENLRQFVESLLPGNLVEKVTNKNYVRFLSGWQQENKPHALLFGQTPAAPLLYKLTAFAYKDYVSFGYVYVGLRGVEEMTRQYNVNIYAPTMLIFKEHINKPADAIQARGLKKQVIEDFITQNKYLLASRLTSQKLFHELCPVKRSHRQRKYCVVLLTAEANKLSKPFDAFLSFALANTQDTVRFVHVYSSRQQEFASTLLPDIEAFQGKSGVSILERRNTAGRVVFKTLEDPWTGSESDKFVLLGYLDQLRKDPAFLSSEAVLPDLTDELAPVFLLRWLYSVSDYLSDFWESLLHSNWREMMPLLSLIFSALFILFGTVIVQAFSDSNEERESHPPDKEEVPEKAGKTEPSFTKESSSKIPKKGFVEVTELTDVTYTSNLVRLRPGHMNVVLILSNSTKTSLLQKFALEVYTFTGSSSLHFSFLTLDKHREWLEYLLEFAQDAAPIPNQYDKHFMERDYTGYVLALNGHKKYFCLFKPLKTVDEETVGSCDLDSSRGKPPCGLGPKPLKGKLSKLSLWMERLLEGSLQRFYIPSWPELD.

The N-terminal stretch at 1–25 is a signal peptide; sequence MELKRLSISWQFLIVLVLILQSLSA. At 26–532 the chain is on the cytoplasmic side; the sequence is LDFDPYRVLG…ESLLHSNWRE (507 aa). The J domain maps to 29–93; the sequence is DPYRVLGVSR…EKRTNYDHYG (65 aa). The region spanning 116 to 244 is the Thioredoxin domain; the sequence is FYFDESFFHF…LRQFVESLLP (129 aa). A helical; Anchor for type IV membrane protein transmembrane segment spans residues 533–553; that stretch reads MMPLLSLIFSALFILFGTVIV. Residues 554-771 are Extracellular-facing; that stretch reads QAFSDSNEER…FYIPSWPELD (218 aa). Positions 559-590 are disordered; sequence SNEERESHPPDKEEVPEKAGKTEPSFTKESSS. A compositionally biased stretch (basic and acidic residues) spans 560–579; it reads NEERESHPPDKEEVPEKAGK. Asn-628 is a glycosylation site (N-linked (GlcNAc...) asparagine).

The protein resides in the endoplasmic reticulum membrane. Plays an important role in regulating the size of autophagosomes during the formation process. This is DnaJ homolog subfamily C member 16 (Dnajc16) from Rattus norvegicus (Rat).